The chain runs to 243 residues: R-spondin-2 (243 aa).

Residues 1-23 (MRFCLFSFALIILNCMDYSQCQG) form the signal peptide. 11 cysteine pairs are disulfide-bonded: Cys40–Cys46, Cys43–Cys52, Cys55–Cys74, Cys78–Cys93, Cys96–Cys104, Cys101–Cys110, Cys113–Cys124, Cys128–Cys141, Cys145–Cys187, Cys156–Cys163, and Cys196–Cys203. Residues 90–134 (MNRCARCRIENCDSCFSKDFCTKCKVGFYLHRGRCFDECPDGFAP) form an FU repeat. Residues 144 to 204 (GCEVGHWSEW…RCKMAMRHCP (61 aa)) form the TSP type-1 domain. N-linked (GlcNAc...) asparagine glycosylation occurs at Asn160. Residues 204–224 (PGGKRTPKAKEKRNKKKRRKL) show a composition bias toward basic residues. The interval 204-243 (PGGKRTPKAKEKRNKKKRRKLIERAQEQHSVFLATDRVNQ) is disordered.

Belongs to the R-spondin family. As to quaternary structure, interacts with WNT1. Binds heparin. Interacts with LGR4, LGR5 and LGR6.

Its subcellular location is the secreted. Functionally, activator of the canonical Wnt signaling pathway by acting as a ligand for LGR4-6 receptors. Upon binding to LGR4-6 (LGR4, LGR5 or LGR6), LGR4-6 associate with phosphorylated LRP6 and frizzled receptors that are activated by extracellular Wnt receptors, triggering the canonical Wnt signaling pathway to increase expression of target genes. Also regulates the canonical Wnt/beta-catenin-dependent pathway and non-canonical Wnt signaling by acting as an inhibitor of ZNRF3, an important regulator of the Wnt signaling pathway. Probably also acts as a ligand for frizzled and LRP receptors. During embryonic development, plays a crucial role in limb specification, amplifying the Wnt signaling pathway independently of LGR4-6 receptors, possibly by acting as a direct antagonistic ligand to RNF43 and ZNRF3, hence governing the number of limbs an embryo should form. In Mus musculus (Mouse), this protein is R-spondin-2 (Rspo2).